Here is a 307-residue protein sequence, read N- to C-terminus: tRNA dimethylallyltransferase (307 aa).

Residue 9-16 (GPTAVGKT) participates in ATP binding. 11–16 (TAVGKT) contacts substrate. An interaction with substrate tRNA region spans residues 34 to 37 (DSMQ).

The protein belongs to the IPP transferase family. In terms of assembly, monomer. Requires Mg(2+) as cofactor.

The enzyme catalyses adenosine(37) in tRNA + dimethylallyl diphosphate = N(6)-dimethylallyladenosine(37) in tRNA + diphosphate. Catalyzes the transfer of a dimethylallyl group onto the adenine at position 37 in tRNAs that read codons beginning with uridine, leading to the formation of N6-(dimethylallyl)adenosine (i(6)A). The protein is tRNA dimethylallyltransferase of Limosilactobacillus reuteri (strain DSM 20016) (Lactobacillus reuteri).